Reading from the N-terminus, the 290-residue chain is UPF0761 membrane protein ASA_4118 (290 aa).

The next 6 membrane-spanning stretches (helical) occupy residues 48–68 (LLSL…FPVF), 104–124 (NTTA…ISAI), 144–164 (FAMY…SIAI), 182–202 (IGYL…FLLV), 216–236 (AFIG…GFAI), and 250–270 (ALAT…VVLL).

It belongs to the UPF0761 family.

The protein resides in the cell inner membrane. This chain is UPF0761 membrane protein ASA_4118, found in Aeromonas salmonicida (strain A449).